The following is a 452-amino-acid chain: GTPase Der (452 aa).

EngA-type G domains are found at residues 4–169 and 177–352; these read PVVA…PPAA and IKVA…ESHR. GTP is bound by residues 10-17, 57-61, 120-123, 183-190, 230-234, and 295-298; these read GRPNVGKS, DTGGL, NKCE, DTAGI, and NKWD. One can recognise a KH-like domain in the interval 353–438; sequence RRVSTSVIND…PIRLIWRGKP (86 aa).

Belongs to the TRAFAC class TrmE-Era-EngA-EngB-Septin-like GTPase superfamily. EngA (Der) GTPase family. As to quaternary structure, associates with the 50S ribosomal subunit.

Its function is as follows. GTPase that plays an essential role in the late steps of ribosome biogenesis. The chain is GTPase Der from Microcystis aeruginosa (strain NIES-843 / IAM M-2473).